The chain runs to 121 residues: Small ribosomal subunit protein uS13 (121 aa).

Residues 94–121 (GLPVRGQNTKNNARTRKGPRRTVANKKK) form a disordered region. The segment covering 106-121 (ARTRKGPRRTVANKKK) has biased composition (basic residues).

It belongs to the universal ribosomal protein uS13 family. Part of the 30S ribosomal subunit. Forms a loose heterodimer with protein S19. Forms two bridges to the 50S subunit in the 70S ribosome.

Its function is as follows. Located at the top of the head of the 30S subunit, it contacts several helices of the 16S rRNA. In the 70S ribosome it contacts the 23S rRNA (bridge B1a) and protein L5 of the 50S subunit (bridge B1b), connecting the 2 subunits; these bridges are implicated in subunit movement. Contacts the tRNAs in the A and P-sites. This Geobacillus sp. (strain WCH70) protein is Small ribosomal subunit protein uS13.